Reading from the N-terminus, the 393-residue chain is Beta-ureidopropionase (393 aa).

Residues 72 to 344 (VRVGLVQNRI…DGLLVTELNL (273 aa)) form the CN hydrolase domain. Residue glutamate 119 is the Proton acceptor of the active site. Residue lysine 196 is the Proton donor of the active site. Catalysis depends on cysteine 233, which acts as the Nucleophile. Serine 378 bears the Phosphoserine mark.

Belongs to the carbon-nitrogen hydrolase superfamily. BUP family. As to quaternary structure, homodimer, homotetramer, homooctamer; can also form higher homooligomers.

It is found in the cytoplasm. The enzyme catalyses 3-(carbamoylamino)propanoate + H2O + 2 H(+) = beta-alanine + NH4(+) + CO2. The catalysed reaction is 3-(carbamoylamino)-2-methylpropanoate + H2O + 2 H(+) = (R)-3-amino-2-methylpropanoate + NH4(+) + CO2. The protein operates within amino-acid biosynthesis; beta-alanine biosynthesis. Functionally, catalyzes a late step in pyrimidine degradation. Converts N-carbamoyl-beta-alanine (3-ureidopropanoate) into beta-alanine, ammonia and carbon dioxide. Likewise, converts N-carbamoyl-beta-aminoisobutyrate (3-ureidoisobutyrate) into beta-aminoisobutyrate, ammonia and carbon dioxide. In Mus musculus (Mouse), this protein is Beta-ureidopropionase (Upb1).